A 905-amino-acid polypeptide reads, in one-letter code: Protein translocase subunit SecA (905 aa).

ATP-binding positions include Q87, 105-109, and D512; that span reads GEGKT. A disordered region spans residues 836-905; that stretch reads DVDAVDEQRK…KKYKHCHGKL (70 aa). The segment covering 841–858 has biased composition (basic and acidic residues); that stretch reads DEQRKAADSAPREFRHEQ. Zn(2+) contacts are provided by C890, C892, C901, and H902. The span at 896-905 shows a compositional bias: basic residues; that stretch reads KKYKHCHGKL.

This sequence belongs to the SecA family. In terms of assembly, monomer and homodimer. Part of the essential Sec protein translocation apparatus which comprises SecA, SecYEG and auxiliary proteins SecDF-YajC and YidC. Zn(2+) is required as a cofactor.

Its subcellular location is the cell inner membrane. The protein localises to the cytoplasm. The enzyme catalyses ATP + H2O + cellular proteinSide 1 = ADP + phosphate + cellular proteinSide 2.. Part of the Sec protein translocase complex. Interacts with the SecYEG preprotein conducting channel. Has a central role in coupling the hydrolysis of ATP to the transfer of proteins into and across the cell membrane, serving both as a receptor for the preprotein-SecB complex and as an ATP-driven molecular motor driving the stepwise translocation of polypeptide chains across the membrane. This Idiomarina loihiensis (strain ATCC BAA-735 / DSM 15497 / L2-TR) protein is Protein translocase subunit SecA.